We begin with the raw amino-acid sequence, 453 residues long: Phosphatidylserine decarboxylase proenzyme 1, mitochondrial (453 aa).

The transit peptide at 1–29 (MKPRFPQNVYFLARYSYLRRFQHSQRRTF) directs the protein to the mitochondrion. Topologically, residues 30 to 74 (SSFLNNIRSNYSGARASPLGGSSGAGAGAGGGGTGDSKGNAFLVP) are mitochondrial matrix. A helical transmembrane segment spans residues 75–93 (GATMATILMLGALHARRLY). At 94–453 (EDKKIEEKRE…GQALGRWKEE (360 aa)) the chain is on the mitochondrial intermembrane side. Active-site charge relay system; for autoendoproteolytic cleavage activity residues include D199, H296, and S408. The Schiff-base intermediate with substrate; via pyruvic acid; for decarboxylase activity role is filled by S408. S408 carries the post-translational modification Pyruvic acid (Ser); by autocatalysis.

This sequence belongs to the phosphatidylserine decarboxylase family. PSD-B subfamily. Eukaryotic type I sub-subfamily. Heterodimer of a large membrane-associated beta subunit and a small pyruvoyl-containing alpha subunit. It depends on pyruvate as a cofactor. Post-translationally, is synthesized initially as an inactive proenzyme. Formation of the active enzyme involves a self-maturation process in which the active site pyruvoyl group is generated from an internal serine residue via an autocatalytic post-translational modification. Two non-identical subunits are generated from the proenzyme in this reaction, and the pyruvate is formed at the N-terminus of the alpha chain, which is derived from the carboxyl end of the proenzyme. The autoendoproteolytic cleavage occurs by a canonical serine protease mechanism, in which the side chain hydroxyl group of the serine supplies its oxygen atom to form the C-terminus of the beta chain, while the remainder of the serine residue undergoes an oxidative deamination to produce ammonia and the pyruvoyl prosthetic group on the alpha chain. During this reaction, the Ser that is part of the protease active site of the proenzyme becomes the pyruvoyl prosthetic group, which constitutes an essential element of the active site of the mature decarboxylase. In terms of tissue distribution, expressed in roots, leaves, stems and flowers.

It localises to the mitochondrion. The protein localises to the mitochondrion inner membrane. The enzyme catalyses a 1,2-diacyl-sn-glycero-3-phospho-L-serine + H(+) = a 1,2-diacyl-sn-glycero-3-phosphoethanolamine + CO2. Its pathway is phospholipid metabolism; phosphatidylethanolamine biosynthesis; phosphatidylethanolamine from CDP-diacylglycerol: step 2/2. In terms of biological role, catalyzes the formation of phosphatidylethanolamine (PtdEtn) from phosphatidylserine (PtdSer). Plays a central role in phospholipid metabolism and in the interorganelle trafficking of phosphatidylserine. Contributes only to a minor proportion of PtdEtn production. The chain is Phosphatidylserine decarboxylase proenzyme 1, mitochondrial (PSD1) from Arabidopsis thaliana (Mouse-ear cress).